The primary structure comprises 365 residues: Gibberellin 20 oxidase 1-A (365 aa).

Positions 199–299 (GNDSIMRLNY…RKSLAFFLCP (101 aa)) constitute a Fe2OG dioxygenase domain. Fe cation is bound by residues H224, D226, and H280. R290 is an active-site residue.

Belongs to the iron/ascorbate-dependent oxidoreductase family. GA20OX subfamily. Fe cation serves as cofactor. The cofactor is L-ascorbate. In terms of tissue distribution, expressed in nodes and the ear of the elongating stem.

The catalysed reaction is gibberellin A12 + 2 2-oxoglutarate + 3 O2 + H(+) = gibberellin A9 + 2 succinate + 3 CO2 + 2 H2O. It catalyses the reaction gibberellin A53 + 2 2-oxoglutarate + 3 O2 + H(+) = gibberellin A20 + 2 succinate + 3 CO2 + 2 H2O. Functionally, key oxidase enzyme in the biosynthesis of gibberellin that catalyzes the conversion of GA12 and GA53 to GA9 and GA20 respectively, via a three-step oxidation at C-20 of the GA skeleton. The protein is Gibberellin 20 oxidase 1-A (GA20ox1A) of Triticum aestivum (Wheat).